The chain runs to 173 residues: Protein sym1 (173 aa).

4 consecutive transmembrane segments (helical) span residues 12 to 32, 52 to 72, 129 to 149, and 151 to 171; these read QPIL…DVLA, MALY…GFLQ, ANLT…PLEY, and VLVV…INSG.

This sequence belongs to the peroxisomal membrane protein PXMP2/4 family.

It is found in the mitochondrion inner membrane. Functionally, may be involved in cellular response to stress. Required to maintain mitochondrial DNA (mtDNA) integrity and stability. In Aspergillus oryzae (strain ATCC 42149 / RIB 40) (Yellow koji mold), this protein is Protein sym1 (sym1).